The following is a 215-amino-acid chain: Eukaryotic translation initiation factor 4E-1 (215 aa).

A disordered region spans residues 1–35; that stretch reads MAEDTETRPASAGAEEREEGEIADDGDGSAAAAAG. A compositionally biased stretch (acidic residues) spans 16–27; that stretch reads EREEGEIADDGD. EIF4G-binding regions lie at residues 40 to 43 and 50 to 86; these read HPLE and FDNPQGKSRAVAWGSTIHPIHTFSTVEDFWSLYNNIH. Residues 58–63, Lys-90, and 108–109 each bind mRNA; these read RAVAWG and WE. Residues Cys-113 and Cys-151 are joined by a disulfide bond. Residues 134-143 are EIF4G-binding; it reads HTLLALIGEQ. Residues 158-163 and 203-207 contribute to the mRNA site; these read RKNQER and KRSDK.

The protein belongs to the eukaryotic initiation factor 4E family. In terms of assembly, EIF4F is a multi-subunit complex, the composition of which varies with external and internal environmental conditions. It is composed of at least EIF4A, EIF4E and EIF4G. EIF4E is also known to interact with other partners. In higher plants two isoforms of EIF4F have been identified, named isoform EIF4F and isoform EIF(iso)4F. Isoform EIF4F has subunits p220 and p26, whereas isoform EIF(iso)4F has subunits p82 and p28. As to quaternary structure, (Microbial infection) Interacts with potyvirus viral genome-linked protein (VPg); this interaction is possible in susceptible hosts but impaired in resistant plants. Post-translationally, according to the redox status, the Cys-113-Cys-151 disulfide bridge may have a role in regulating protein function by affecting its ability to bind capped mRNA.

The protein resides in the nucleus. Its subcellular location is the cytoplasm. Functionally, component of the protein complex eIF4F, which is involved in the recognition of the mRNA cap, ATP-dependent unwinding of 5'-terminal secondary structure and recruitment of mRNA to the ribosome. Recognizes and binds the 7-methylguanosine-containing mRNA cap during an early step in the initiation of protein synthesis and facilitates ribosome binding by inducing the unwinding of the mRNAs secondary structures. Key component of recessive resistance to potyviruses and bymoviruses, including barley yellow mosaic virus and barley mild mosaic virus. (Microbial infection) Susceptibility host factor required for viral infection by recruiting viral RNAs to the host ribosomal complex via an interaction with viral genome-linked protein (VPg). This is Eukaryotic translation initiation factor 4E-1 from Hordeum vulgare subsp. vulgare (Domesticated barley).